Consider the following 583-residue polypeptide: Chloroplast sensor kinase, chloroplastic (583 aa).

The N-terminal 50 residues, 1-50 (MSSIYLHGLSRRRRIGSVIVAIYMLDSCGAFLSASGSGRYPGFSYRGLSV), are a transit peptide targeting the chloroplast. A GAF region spans residues 97-277 (LFQELALSQL…SMDTERAALQ (181 aa)). Residue cysteine 115 participates in [3Fe-4S] cluster binding. Histidine 292 is modified (phosphohistidine; by autocatalysis). The interval 412 to 442 (AASGSNGPSNSTTSFSGNGSDVSTYTEDDGA) is disordered. Positions 414–431 (SGSNGPSNSTTSFSGNGS) are enriched in low complexity. Positions 447 to 583 (SSLFSEMDLE…ALDWTLRKHW (137 aa)) constitute a Histidine kinase domain.

It belongs to the chloroplast sensor kinase protein family. Oligomerizes. [3Fe-4S] cluster is required as a cofactor. Autophosphorylates, possibly on His-292.

It is found in the plastid. The protein resides in the chloroplast stroma. It catalyses the reaction ATP + protein L-histidine = ADP + protein N-phospho-L-histidine.. In terms of biological role, sensor kinase that senses the plastoquinone (PQ) redox state involved in stoichiometry adjustment of both photosystems (e.g. long-term adaptation via transcriptional regulation of reaction center genes of photosystems I and II) and state transitions (e.g. short-term adaptation involving reversible post-translational phosphorylation of light-harvesting complex II, LHC II), thus linking photosynthesis with gene expression in chloroplasts. Reduced PQ suppresses its autophosphorylation activity. The polypeptide is Chloroplast sensor kinase, chloroplastic (Phaeodactylum tricornutum (strain CCAP 1055/1)).